Reading from the N-terminus, the 518-residue chain is Retinal dehydrogenase 2 (518 aa).

The residue at position 168 (Y168) is a Phosphotyrosine. Residues 184–186 (IPW), 210–213 (KPAE), and 264–266 (STE) each bind NAD(+). E286 acts as the Proton acceptor in catalysis. C320 acts as the Nucleophile in catalysis. Phosphoserine is present on S351. NAD(+)-binding positions include 366–370 (KQYNK) and E417.

This sequence belongs to the aldehyde dehydrogenase family. As to quaternary structure, homotetramer. In terms of tissue distribution, found in testis and less abundantly in lung, brain, heart, liver and kidney.

Its subcellular location is the cytoplasm. The enzyme catalyses retinal + NAD(+) + H2O = retinoate + NADH + 2 H(+). It catalyses the reaction all-trans-retinal + NAD(+) + H2O = all-trans-retinoate + NADH + 2 H(+). It carries out the reaction all-trans-13,14-dihydroretinal + NAD(+) + H2O = all-trans-13,14-dihydroretinoate + NADH + 2 H(+). The protein operates within cofactor metabolism; retinol metabolism. In terms of biological role, catalyzes the NAD-dependent oxidation of aldehyde substrates, such as all-trans-retinal and all-trans-13,14-dihydroretinal, to their corresponding carboxylic acids, all-trans-retinoate and all-trans-13,14-dihydroretinoate, respectively. Retinoate signaling is critical for the transcriptional control of many genes, for instance it is crucial for initiation of meiosis in both male and female. Recognizes retinal as substrate, both in its free form and when bound to cellular retinol-binding protein. Lacks activity with benzaldehyde, acetaldehyde and octanal. Displays complete lack of activity with citral. The chain is Retinal dehydrogenase 2 (Aldh1a2) from Rattus norvegicus (Rat).